A 373-amino-acid polypeptide reads, in one-letter code: UDP-N-acetylglucosamine--N-acetylmuramyl-(pentapeptide) pyrophosphoryl-undecaprenol N-acetylglucosamine transferase (373 aa).

UDP-N-acetyl-alpha-D-glucosamine-binding positions include 14–16, asparagine 128, arginine 165, serine 199, and glutamine 295; that span reads TAG.

Belongs to the glycosyltransferase 28 family. MurG subfamily.

It is found in the cell membrane. The catalysed reaction is di-trans,octa-cis-undecaprenyl diphospho-N-acetyl-alpha-D-muramoyl-L-alanyl-D-glutamyl-meso-2,6-diaminopimeloyl-D-alanyl-D-alanine + UDP-N-acetyl-alpha-D-glucosamine = di-trans,octa-cis-undecaprenyl diphospho-[N-acetyl-alpha-D-glucosaminyl-(1-&gt;4)]-N-acetyl-alpha-D-muramoyl-L-alanyl-D-glutamyl-meso-2,6-diaminopimeloyl-D-alanyl-D-alanine + UDP + H(+). The protein operates within cell wall biogenesis; peptidoglycan biosynthesis. Cell wall formation. Catalyzes the transfer of a GlcNAc subunit on undecaprenyl-pyrophosphoryl-MurNAc-pentapeptide (lipid intermediate I) to form undecaprenyl-pyrophosphoryl-MurNAc-(pentapeptide)GlcNAc (lipid intermediate II). The polypeptide is UDP-N-acetylglucosamine--N-acetylmuramyl-(pentapeptide) pyrophosphoryl-undecaprenol N-acetylglucosamine transferase (Mycobacterium sp. (strain JLS)).